The following is a 113-amino-acid chain: Small ribosomal subunit protein uS17 (113 aa).

It belongs to the universal ribosomal protein uS17 family. Part of the 30S ribosomal subunit.

In terms of biological role, one of the primary rRNA binding proteins, it binds specifically to the 5'-end of 16S ribosomal RNA. The protein is Small ribosomal subunit protein uS17 of Pyrococcus furiosus (strain ATCC 43587 / DSM 3638 / JCM 8422 / Vc1).